The primary structure comprises 1653 residues: Ciliary rootlet coiled-coil protein 2 (1653 aa).

A compositionally biased stretch (polar residues) spans 1 to 17 (MSSASSEPGNGDASQQP). The tract at residues 1 to 57 (MSSASSEPGNGDASQQPLLGLDTVIQRLEDTILSPTASREDRALTVRGEGRQASPTP) is disordered. Basic and acidic residues predominate over residues 38–50 (SREDRALTVRGEG). Coiled coils occupy residues 86 to 145 (VARV…SELE) and 310 to 351 (KVAL…LVAQ). Residues 367–396 (LGEPRRPLRSPQRATSPHQGASPPHICSPA) form a disordered region. The stretch at 423–1215 (LKSSQALVAS…QRKLAEVEAA (793 aa)) forms a coiled coil. The disordered stretch occupies residues 1302 to 1356 (GLQRQSPWASPEQPGSPTKGSDSSQALPGQQGTSPPARPHSPLRWPSPTPGGRSS). Over residues 1304 to 1335 (QRQSPWASPEQPGSPTKGSDSSQALPGQQGTS) the composition is skewed to polar residues. A coiled-coil region spans residues 1361 to 1570 (VATVQDILRD…QAQMTEMEQA (210 aa)).

This sequence belongs to the rootletin family.

This chain is Ciliary rootlet coiled-coil protein 2, found in Homo sapiens (Human).